The following is a 151-amino-acid chain: Large ribosomal subunit protein bL9 (151 aa).

The protein belongs to the bacterial ribosomal protein bL9 family.

Functionally, binds to the 23S rRNA. The polypeptide is Large ribosomal subunit protein bL9 (Chlorobium chlorochromatii (strain CaD3)).